Consider the following 250-residue polypeptide: MEEIKRLVLAMQFMTRLPIPIEIDVEKREFYRIASYFPIVGIVIGGILSLLYIALKDFFSREIVMTFIVAFSYVLTGAMHIDGLADTFDGLFSNKDKSKMLEIMRDSRLGTNGVLAAIFIVVLKILFLTNIHENITLTALLITPIIGRLSIVFSMMISKSARGGEGLGGLMLGKVGIREFAIAFVISIATSYFILPLAVFVKILTISLFVTYIVSKYISLRIGGMTGDTLGAVNELAELTALICFVSVSL.

6 consecutive transmembrane segments (helical) span residues 33–53 (IASY…LLYI), 63–83 (IVMT…HIDG), 109–129 (LGTN…LFLT), 137–157 (LTAL…SMMI), 180–200 (FAIA…LAVF), and 203–223 (ILTI…LRIG).

It belongs to the CobS family. The cofactor is Mg(2+).

It localises to the cell membrane. It carries out the reaction alpha-ribazole + adenosylcob(III)inamide-GDP = adenosylcob(III)alamin + GMP + H(+). It catalyses the reaction alpha-ribazole 5'-phosphate + adenosylcob(III)inamide-GDP = adenosylcob(III)alamin 5'-phosphate + GMP + H(+). It functions in the pathway cofactor biosynthesis; adenosylcobalamin biosynthesis; adenosylcobalamin from cob(II)yrinate a,c-diamide: step 7/7. Functionally, joins adenosylcobinamide-GDP and alpha-ribazole to generate adenosylcobalamin (Ado-cobalamin). Also synthesizes adenosylcobalamin 5'-phosphate from adenosylcobinamide-GDP and alpha-ribazole 5'-phosphate. In Thermoanaerobacter pseudethanolicus (strain ATCC 33223 / 39E) (Clostridium thermohydrosulfuricum), this protein is Adenosylcobinamide-GDP ribazoletransferase.